A 498-amino-acid chain; its full sequence is MEKYILSIDQGTTSSRAILFNQKGEIAGVAQREFKQYFPQSGWVEHDANEIWTSVLAVMTEVINENDVRADQIAGIGITNQRETTVVWDKHTGRPIYHAIVWQSRQTQSICSELKQQGYEQTFRDKTGLLLDPYFAGTKVKWILDNVEGAREKAENGDLLFGTIDTWLVWKLSGKAAHITDYSNASRTLMFNIHDLEWDDELLELLTVPKNMLPEVKPSSEVYGKTIDYHFYGQEVPIAGVAGDQQAALFGQACFERGDVKNTYGTGGFMLMNTGDKAVKSESGLLTTIAYGIDGKVNYALEGSIFVSGSAIQWLRDGLRMINSAPQSESYATRVDSTEGVYVVPAFVGLGTPYWDSEARGAIFGLSRGTEKEHFIRATLESLCYQTRDVMEAMSKDSGIDVQSLRVDGGAVKNNFIMQFQADIVNTSVERPEIQETTALGAAFLAGLAVGFWESKDDIAKNWKLEEKFDPKMDEGEREKLYRGWKKAVEATQVFKTE.

Threonine 12 contributes to the ADP binding site. ATP is bound by residues threonine 12, threonine 13, and serine 14. Threonine 12 is a binding site for sn-glycerol 3-phosphate. Position 16 (arginine 16) interacts with ADP. Sn-glycerol 3-phosphate-binding residues include arginine 82, glutamate 83, and tyrosine 134. Glycerol contacts are provided by arginine 82, glutamate 83, and tyrosine 134. Histidine 230 is modified (phosphohistidine; by HPr). Aspartate 244 is a sn-glycerol 3-phosphate binding site. Aspartate 244 and glutamine 245 together coordinate glycerol. Residues threonine 266 and glycine 309 each contribute to the ADP site. ATP-binding residues include threonine 266, glycine 309, glutamine 313, and glycine 410. ADP is bound by residues glycine 410 and asparagine 414.

The protein belongs to the FGGY kinase family. In terms of assembly, homotetramer and homodimer (in equilibrium). The phosphoenolpyruvate-dependent sugar phosphotransferase system (PTS), including enzyme I, and histidine-containing protein (HPr) are required for the phosphorylation, which leads to the activation of the enzyme.

The catalysed reaction is glycerol + ATP = sn-glycerol 3-phosphate + ADP + H(+). It participates in polyol metabolism; glycerol degradation via glycerol kinase pathway; sn-glycerol 3-phosphate from glycerol: step 1/1. Its activity is regulated as follows. Activated by phosphorylation and inhibited by fructose 1,6-bisphosphate (FBP). In terms of biological role, key enzyme in the regulation of glycerol uptake and metabolism. Catalyzes the phosphorylation of glycerol to yield sn-glycerol 3-phosphate. The polypeptide is Glycerol kinase (Staphylococcus aureus (strain MW2)).